Consider the following 357-residue polypeptide: Peptide chain release factor 1 (357 aa).

Q234 bears the N5-methylglutamine mark.

The protein belongs to the prokaryotic/mitochondrial release factor family. In terms of processing, methylated by PrmC. Methylation increases the termination efficiency of RF1.

The protein localises to the cytoplasm. Peptide chain release factor 1 directs the termination of translation in response to the peptide chain termination codons UAG and UAA. This chain is Peptide chain release factor 1, found in Nocardioides sp. (strain ATCC BAA-499 / JS614).